Here is a 232-residue protein sequence, read N- to C-terminus: Movement and silencing protein TGBp1 (232 aa).

A (+)RNA virus helicase ATP-binding domain is found at 1-117 (MDVLINKLAS…GPGIVADFVC (117 aa)). The 115-residue stretch at 118–232 (NKTKRFGSST…ACPDATFAPS (115 aa)) folds into the (+)RNA virus helicase C-terminal domain.

Belongs to the Tymovirales TGBp1 protein family. As to quaternary structure, homodimer and homooligomer. Interacts with capsid protein. Interacts with host AGO1; this interaction targets the host protein for degradation, thereby suppressing the antiviral RNA silencing.

The protein localises to the host cytoplasm. In terms of biological role, transports viral genome to neighboring plant cells directly through plasmosdesmata, without any budding. The movement protein allows efficient cell to cell propagation, by bypassing the host cell wall barrier. Increases plasmodesma size exclusion limit. Acts as a suppressor of RNA-mediated gene silencing, also known as post-transcriptional gene silencing (PTGS), a mechanism of plant viral defense that limits the accumulation of viral RNAs. In Populus balsamifera (Balsam poplar), this protein is Movement and silencing protein TGBp1.